We begin with the raw amino-acid sequence, 281 residues long: Auxin-responsive protein IAA10 (281 aa).

Disordered stretches follow at residues 1 to 115 and 130 to 157; these read MRGG…VVGW and AKEN…EEGE. Over residues 7-17 the composition is skewed to low complexity; that stretch reads GPTAGEPPGTE. The segment covering 18–35 has biased composition (acidic residues); that stretch reads AEAEEVEESSAGDDEELE. The EAR-like (transcriptional repression) signature appears at 36 to 40; that stretch reads LGLSL. 2 stretches are compositionally biased toward low complexity: residues 36-49 and 63-84; these read LGLS…QQQQ and PAAA…AAAA. A compositionally biased stretch (basic and acidic residues) spans 133–157; the sequence is NTSETDTKKTATNESDVQKDKEEGE. Residues 163–259 enclose the PB1 domain; it reads AGWVKVNMDG…KRLRIMRTSD (97 aa).

This sequence belongs to the Aux/IAA family. In terms of assembly, homodimers and heterodimers. As to expression, highly expressed in flowers. Expressed in shoots.

It is found in the nucleus. Its function is as follows. Aux/IAA proteins are short-lived transcriptional factors that function as repressors of early auxin response genes at low auxin concentrations. This is Auxin-responsive protein IAA10 (IAA10) from Oryza sativa subsp. indica (Rice).